Here is a 946-residue protein sequence, read N- to C-terminus: MLKLLLGDPNARKLKRYQPLVSDINLLEEDIAPLSDEDLRRRTSEFRQQLENAGSLERQRPVLDQLLPEAFAIVREAGKRVLGMRHFDVQLLGGMVLHDGQIAEMKTGEGKTLVATLPSYLNALTGRGVHVVTVNDYLARRDAEWMGQVHRFLGLSVGLIQQDMSPAERRQNYGCDVTYATNSELGFDYLRDNMATDISEVVQREFQYCVIDEVDSILVDEARTPLIISGQVERPQEKYNQAAALALQLDRAAEMSKDGIDPEGDYEVDEKQRSVILTDEGYAKAESILGVEDLFNAADPWAHYVTNALKAKELFIKDVNYITRDNEVVIVDEFTGRVMPGRRWSDGLHQAVEAKESMPIQPETQTLASITYQNFFLLYPRLAGMTGTAKTEEVEFEKTYKLEVTVVPTNRTRARRDLVDQVYKTETGKWRAVAQETAEVHRTGRPVLVGTTSVEKSEVLSALLQEEGIPHNLLNAKPENVEREAEIVAQAGRTGAVTIATNMAGRGTDIILGGNTDYMARLKVREALLPRLVRPEEGHRPPVPLQREASSGFAAAASAPAKPPSEARALGRLYPCELSPDTDAALADVARELVKLWGDRTLTVLELEDRISSAAEKAPSEDAGIMQLRQVLAQIRADYDAVISTEQASVRETGGLHVIGTERHESRRVDNQLRGRAGRQGDPGSTRFFLSLEDNLLRIFGGDRVAGLMNAFRVEEDMPIESGMLTRSLEGAQKKVETYYYDMRKQVFEYDEVMNNQRRAVYVERRRVLEGRDLKKQVLGYGERTMDDIVEAYVNPELPPEEWDLSHLTNKVKEFVYLLQDLEPQQLAGLSMEELKAFLHEQLRIAYDLKEAEIEQLKPGLMREAERFFILQQIDSLWREHLQSMDALRESVGLRGYGQKDPLIEYKNEGYDMFLEMMTQVRRNVIYSMFMFQPQPAPAQEDEAVV.

ATP-binding positions include glutamine 90, 108–112 (GEGKT), and aspartate 509.

The protein belongs to the SecA family. Monomer and homodimer. Part of the essential Sec protein translocation apparatus which comprises SecA, SecYEG and auxiliary proteins SecDF. Other proteins may also be involved.

Its subcellular location is the cell inner membrane. The protein resides in the cellular thylakoid membrane. It is found in the cytoplasm. The enzyme catalyses ATP + H2O + cellular proteinSide 1 = ADP + phosphate + cellular proteinSide 2.. Its function is as follows. Part of the Sec protein translocase complex. Interacts with the SecYEG preprotein conducting channel. Has a central role in coupling the hydrolysis of ATP to the transfer of proteins into and across the cell membrane, serving as an ATP-driven molecular motor driving the stepwise translocation of polypeptide chains across the membrane. In terms of biological role, probably participates in protein translocation into and across both the cytoplasmic and thylakoid membranes in cyanobacterial cells. This is Protein translocase subunit SecA from Synechococcus sp. (strain RCC307).